The sequence spans 61 residues: Phosphoenolpyruvate synthase (61 aa).

It belongs to the PEP-utilizing enzyme family. Mg(2+) serves as cofactor.

The enzyme catalyses pyruvate + ATP + H2O = phosphoenolpyruvate + AMP + phosphate + 2 H(+). It functions in the pathway carbohydrate biosynthesis; gluconeogenesis. Its function is as follows. Catalyzes the phosphorylation of pyruvate to phosphoenolpyruvate. The protein is Phosphoenolpyruvate synthase (ppsA) of Enterobacter agglomerans (Erwinia herbicola).